A 301-amino-acid polypeptide reads, in one-letter code: ATP synthase gamma chain (301 aa).

Belongs to the ATPase gamma chain family. F-type ATPases have 2 components, CF(1) - the catalytic core - and CF(0) - the membrane proton channel. CF(1) has five subunits: alpha(3), beta(3), gamma(1), delta(1), epsilon(1). CF(0) has three main subunits: a, b and c.

It is found in the cell inner membrane. In terms of biological role, produces ATP from ADP in the presence of a proton gradient across the membrane. The gamma chain is believed to be important in regulating ATPase activity and the flow of protons through the CF(0) complex. The sequence is that of ATP synthase gamma chain from Helicobacter pylori (strain ATCC 700392 / 26695) (Campylobacter pylori).